Here is a 248-residue protein sequence, read N- to C-terminus: 14-3-3-like protein G-BOX factor 14 kappa (248 aa).

Residues Ser70, Ser112, and Ser193 each carry the phosphoserine modification. At Thr214 the chain carries Phosphothreonine.

It belongs to the 14-3-3 family. As to quaternary structure, interacts with the isocitrate dehydrogenase IDH3, and malate dehydrogenases MDH1 and MDH2. Interacts with CINV1.

The protein localises to the nucleus. The protein resides in the cytoplasm. Is associated with a DNA binding complex that binds to the G box, a well-characterized cis-acting DNA regulatory element found in plant genes. Involved in the regulation of nutrient metabolism. Negative regulator of freezing tolerance that modulates cold-responsive C-repeat-binding factors (CBF) DREB1A AND DREB1B proteins stability by facilitating their ubiquitin-mediated degradation; this processus is counteracted by B1L. In Arabidopsis thaliana (Mouse-ear cress), this protein is 14-3-3-like protein G-BOX factor 14 kappa.